A 144-amino-acid polypeptide reads, in one-letter code: uncharacterized protein (144 aa).

The signal sequence occupies residues 1–23 (MVIPLRNKYGILFLIAVCIMVSG). Residues 119–144 (QNGQRKTMTRIESKTGREEKDEKSKS) are disordered. Basic and acidic residues predominate over residues 127–144 (TRIESKTGREEKDEKSKS).

This is an uncharacterized protein from Bacillus subtilis (strain 168).